The sequence spans 102 residues: Urease subunit beta (102 aa).

It belongs to the urease beta subunit family. In terms of assembly, heterotrimer of UreA (gamma), UreB (beta) and UreC (alpha) subunits. Three heterotrimers associate to form the active enzyme.

It is found in the cytoplasm. The enzyme catalyses urea + 2 H2O + H(+) = hydrogencarbonate + 2 NH4(+). It participates in nitrogen metabolism; urea degradation; CO(2) and NH(3) from urea (urease route): step 1/1. The polypeptide is Urease subunit beta (Acinetobacter baumannii (strain AB307-0294)).